The sequence spans 462 residues: tRNA modification GTPase MnmE (462 aa).

(6S)-5-formyl-5,6,7,8-tetrahydrofolate contacts are provided by R23, E88, and R127. The region spanning 224-383 is the TrmE-type G domain; it reads GLATVIIGRP…LEKAIADLFF (160 aa). N234 provides a ligand contact to K(+). GTP-binding positions include 234–239, 253–259, and 278–281; these read NVGKSS, TDIPGTT, and DTAG. S238 lines the Mg(2+) pocket. Residues T253, I255, and T258 each contribute to the K(+) site. Mg(2+) is bound at residue T259. K462 is a binding site for (6S)-5-formyl-5,6,7,8-tetrahydrofolate.

Belongs to the TRAFAC class TrmE-Era-EngA-EngB-Septin-like GTPase superfamily. TrmE GTPase family. As to quaternary structure, homodimer. Heterotetramer of two MnmE and two MnmG subunits. The cofactor is K(+).

It localises to the cytoplasm. Functionally, exhibits a very high intrinsic GTPase hydrolysis rate. Involved in the addition of a carboxymethylaminomethyl (cmnm) group at the wobble position (U34) of certain tRNAs, forming tRNA-cmnm(5)s(2)U34. The sequence is that of tRNA modification GTPase MnmE from Geobacillus kaustophilus (strain HTA426).